A 576-amino-acid polypeptide reads, in one-letter code: Lysine--tRNA ligase, mitochondrial (576 aa).

The N-terminal 30 residues, 1 to 30, are a transit peptide targeting the mitochondrion; the sequence is MNVLLKRRSLTFAPRWLWCKCRSSRSRPYS.

Belongs to the class-II aminoacyl-tRNA synthetase family.

Its subcellular location is the mitochondrion matrix. The catalysed reaction is tRNA(Lys) + L-lysine + ATP = L-lysyl-tRNA(Lys) + AMP + diphosphate. Catalyzes the attachment of lysine to tRNA(Lys) in the mitochondrion. This chain is Lysine--tRNA ligase, mitochondrial (MSK1), found in Saccharomyces cerevisiae (strain ATCC 204508 / S288c) (Baker's yeast).